Consider the following 335-residue polypeptide: Methylthioribose-1-phosphate isomerase (335 aa).

Substrate is bound by residues arginine 47 to alanine 49, arginine 81, and glutamine 184. Residue aspartate 225 is the Proton donor of the active site. Residue asparagine 235 to lysine 236 participates in substrate binding.

The protein belongs to the eIF-2B alpha/beta/delta subunits family. MtnA subfamily.

The catalysed reaction is 5-(methylsulfanyl)-alpha-D-ribose 1-phosphate = 5-(methylsulfanyl)-D-ribulose 1-phosphate. It functions in the pathway amino-acid biosynthesis; L-methionine biosynthesis via salvage pathway; L-methionine from S-methyl-5-thio-alpha-D-ribose 1-phosphate: step 1/6. In terms of biological role, catalyzes the interconversion of methylthioribose-1-phosphate (MTR-1-P) into methylthioribulose-1-phosphate (MTRu-1-P). This Synechococcus sp. (strain CC9902) protein is Methylthioribose-1-phosphate isomerase.